We begin with the raw amino-acid sequence, 147 residues long: Large ribosomal subunit protein uL15 (147 aa).

The span at 1–20 (MTLRLNDLKPADGARTERTR) shows a compositional bias: basic and acidic residues. The interval 1–61 (MTLRLNDLKP…GFEGGQTPMQ (61 aa)) is disordered. Over residues 23-33 (RGIGSGLGKTA) the composition is skewed to gly residues. A compositionally biased stretch (basic residues) spans 34 to 47 (GRGHKGSFARKGGG).

The protein belongs to the universal ribosomal protein uL15 family. As to quaternary structure, part of the 50S ribosomal subunit.

Binds to the 23S rRNA. The sequence is that of Large ribosomal subunit protein uL15 from Xanthomonas axonopodis pv. citri (strain 306).